Consider the following 331-residue polypeptide: Ketol-acid reductoisomerase (NADP(+)) (331 aa).

The KARI N-terminal Rossmann domain maps to 2-182 (AKMYYDKDAD…GGTRAGVIET (181 aa)). Residues 25 to 28 (FGSQ), Ser-51, Ser-53, and 83 to 86 (DEKQ) contribute to the NADP(+) site. Residue His-108 is part of the active site. Gly-134 is a binding site for NADP(+). A KARI C-terminal knotted domain is found at 183–328 (TFKEETETDL…KGLREMMAWI (146 aa)). The Mg(2+) site is built by Asp-191, Glu-195, Glu-227, and Glu-231. Ser-252 is a binding site for substrate.

This sequence belongs to the ketol-acid reductoisomerase family. The cofactor is Mg(2+).

The enzyme catalyses (2R)-2,3-dihydroxy-3-methylbutanoate + NADP(+) = (2S)-2-acetolactate + NADPH + H(+). It carries out the reaction (2R,3R)-2,3-dihydroxy-3-methylpentanoate + NADP(+) = (S)-2-ethyl-2-hydroxy-3-oxobutanoate + NADPH + H(+). It participates in amino-acid biosynthesis; L-isoleucine biosynthesis; L-isoleucine from 2-oxobutanoate: step 2/4. Its pathway is amino-acid biosynthesis; L-valine biosynthesis; L-valine from pyruvate: step 2/4. Its function is as follows. Involved in the biosynthesis of branched-chain amino acids (BCAA). Catalyzes an alkyl-migration followed by a ketol-acid reduction of (S)-2-acetolactate (S2AL) to yield (R)-2,3-dihydroxy-isovalerate. In the isomerase reaction, S2AL is rearranged via a Mg-dependent methyl migration to produce 3-hydroxy-3-methyl-2-ketobutyrate (HMKB). In the reductase reaction, this 2-ketoacid undergoes a metal-dependent reduction by NADPH to yield (R)-2,3-dihydroxy-isovalerate. The sequence is that of Ketol-acid reductoisomerase (NADP(+)) from Thermoanaerobacter sp. (strain X514).